Reading from the N-terminus, the 159-residue chain is 6,7-dimethyl-8-ribityllumazine synthase (159 aa).

5-amino-6-(D-ribitylamino)uracil contacts are provided by residues W26, 57–59, and 79–81; these read ALE and CVV. A (2S)-2-hydroxy-3-oxobutyl phosphate-binding site is contributed by 84 to 85; it reads GT. The active-site Proton donor is H87. N112 serves as a coordination point for 5-amino-6-(D-ribitylamino)uracil. R126 is a binding site for (2S)-2-hydroxy-3-oxobutyl phosphate.

It belongs to the DMRL synthase family.

The catalysed reaction is (2S)-2-hydroxy-3-oxobutyl phosphate + 5-amino-6-(D-ribitylamino)uracil = 6,7-dimethyl-8-(1-D-ribityl)lumazine + phosphate + 2 H2O + H(+). The protein operates within cofactor biosynthesis; riboflavin biosynthesis; riboflavin from 2-hydroxy-3-oxobutyl phosphate and 5-amino-6-(D-ribitylamino)uracil: step 1/2. Catalyzes the formation of 6,7-dimethyl-8-ribityllumazine by condensation of 5-amino-6-(D-ribitylamino)uracil with 3,4-dihydroxy-2-butanone 4-phosphate. This is the penultimate step in the biosynthesis of riboflavin. The sequence is that of 6,7-dimethyl-8-ribityllumazine synthase from Corynebacterium glutamicum (strain ATCC 13032 / DSM 20300 / JCM 1318 / BCRC 11384 / CCUG 27702 / LMG 3730 / NBRC 12168 / NCIMB 10025 / NRRL B-2784 / 534).